A 457-amino-acid chain; its full sequence is G-protein coupled receptor 135 (457 aa).

The segment at 1–26 (MEEQARPPGRPAASATLQGSAHPGGA) is disordered. The Extracellular segment spans residues 1–64 (MEEQARPPGR…EAAGSRGPAP (64 aa)). Asparagine 47 carries an N-linked (GlcNAc...) asparagine glycan. A helical transmembrane segment spans residues 65–85 (LLWHGAAVAAQALVLLLIFLL). Topologically, residues 86–109 (SSLGNCAVMGVIVKHRQLRTVTNA) are cytoplasmic. Residues 110–130 (FILSLSLSDLLTALLCLPAAF) traverse the membrane as a helical segment. The Extracellular portion of the chain corresponds to 131-156 (LDLFAPPGDSGPWRSFCAASRFFSSC). The chain crosses the membrane as a helical span at residues 157 to 177 (FGIVSTFSVALISLDRYCAIV). Residues 178-189 (RPPRDKLGRRRA) lie on the Cytoplasmic side of the membrane. Residues 190 to 210 (LQLLAGAWLAALGFSLPWDLL) traverse the membrane as a helical segment. Residues 211-235 (RAPREPPAPQSFHRCLYRTSPDPAQ) lie on the Extracellular side of the membrane. Residues 236-256 (LGVAYSVGLVVACYLLPFLLM) form a helical membrane-spanning segment. Residues 257 to 295 (CFCRYHICKTVRLSDVRVRPMTTYARVLRFFSEVRTATT) are Cytoplasmic-facing. Residues 296–316 (VLIMIIFVMCCWGPYCFLVLL) form a helical membrane-spanning segment. Topologically, residues 317 to 329 (AATRQGQATQAPS) are extracellular. Residues 330–350 (LLNVAAVWLTWANGAINPVIY) traverse the membrane as a helical segment. Topologically, residues 351–457 (AIRNPNISML…HNSETRDSSI (107 aa)) are cytoplasmic.

Belongs to the G-protein coupled receptor 1 family. In terms of assembly, interacts with MTNR1B. Interacts with ARRB1 and ARRB2 in a spontaneous and agonist-independent manner; leading to the internalization of GPR135 in the endosomal compartment.

It is found in the cell membrane. The protein resides in the endosome membrane. In terms of biological role, orphan receptor. Has spontaneous activity for beta-arrestin recruitment. Shows a reciprocal regulatory interaction with the melatonin receptor MTNR1B most likely through receptor heteromerization. The polypeptide is G-protein coupled receptor 135 (Gpr135) (Mus musculus (Mouse)).